The primary structure comprises 213 residues: Glutathione S-transferase PARB (213 aa).

The 82-residue stretch at 1-82 folds into the GST N-terminal domain; it reads MAIKVHGSPM…YIAHVYADNG (82 aa). Glutathione is bound by residues Ser11, 12 to 13, 40 to 41, 53 to 54, and 66 to 67; these read TA, HK, QV, and ES. Residues 89-213 form the GST C-terminal domain; that stretch reads DPKKMPSMSV…WVKGLEKLQK (125 aa).

This sequence belongs to the GST superfamily. Phi family.

The catalysed reaction is RX + glutathione = an S-substituted glutathione + a halide anion + H(+). Its function is as follows. Conjugation of reduced glutathione to a wide number of exogenous and endogenous hydrophobic electrophiles. The chain is Glutathione S-transferase PARB from Nicotiana tabacum (Common tobacco).